The primary structure comprises 857 residues: DNA mismatch repair protein MutS (857 aa).

613 to 620 (GPNMGGKS) is a binding site for ATP. Positions 797–820 (TSLPHEQPAAHKAKDAPQVPHQSD) are disordered.

It belongs to the DNA mismatch repair MutS family.

In terms of biological role, this protein is involved in the repair of mismatches in DNA. It is possible that it carries out the mismatch recognition step. This protein has a weak ATPase activity. The chain is DNA mismatch repair protein MutS from Pseudomonas putida (strain ATCC 47054 / DSM 6125 / CFBP 8728 / NCIMB 11950 / KT2440).